Reading from the N-terminus, the 188-residue chain is Single-stranded DNA-binding protein DdrB (188 aa).

The tract at residues 140 to 188 (YAVPGGAAGNGQGRPAPQGQPAQARPQATAARPAARPPVQPGQEEETPF) is disordered. Low complexity predominate over residues 152–173 (GRPAPQGQPAQARPQATAARPA).

Homopentamer arranged in a ring-structure; DNA binds between subunits and along the top of the ring. The pentamers self-associate to coat ssDNA in higher-ordered structures; oligomerization facilitates the assembly of extended nucleoprotein complexes. Self-assembly does not however require ssDNA-binding. Interacts with SSB.

Its function is as follows. ssDNA-binding protein that contributes to the ionizing radiation resistance of D.radiodurans. Plays a role in DNA repair and genome reconstitution in a RecA-independent process. Required for recovery from severe genomic fragmentation as a result of exposure to severe levels of ionizing radiation. Binds ssDNA but not dsDNA. Stimulates annealing of complementary ssDNA. Does not complement an ssb disruption. This Deinococcus radiodurans (strain ATCC 13939 / DSM 20539 / JCM 16871 / CCUG 27074 / LMG 4051 / NBRC 15346 / NCIMB 9279 / VKM B-1422 / R1) protein is Single-stranded DNA-binding protein DdrB (ddrB).